The sequence spans 357 residues: Chorismate synthase (357 aa).

Arg-47 contributes to the NADP(+) binding site. FMN-binding positions include 123-125 (RAS), Gly-281, 296-300 (KPTSS), and Arg-324.

Belongs to the chorismate synthase family. Homotetramer. FMNH2 is required as a cofactor.

The enzyme catalyses 5-O-(1-carboxyvinyl)-3-phosphoshikimate = chorismate + phosphate. It participates in metabolic intermediate biosynthesis; chorismate biosynthesis; chorismate from D-erythrose 4-phosphate and phosphoenolpyruvate: step 7/7. In terms of biological role, catalyzes the anti-1,4-elimination of the C-3 phosphate and the C-6 proR hydrogen from 5-enolpyruvylshikimate-3-phosphate (EPSP) to yield chorismate, which is the branch point compound that serves as the starting substrate for the three terminal pathways of aromatic amino acid biosynthesis. This reaction introduces a second double bond into the aromatic ring system. This chain is Chorismate synthase, found in Chlamydia trachomatis serovar L2 (strain ATCC VR-902B / DSM 19102 / 434/Bu).